Consider the following 250-residue polypeptide: MSFIAIIPARYASTRLPGKPLADIAGKPMVVHVMERALASGADRVIVATDHPDVVKAVEAAGGEVCLTRADHQSGTERLAEVIEHYGFADDDIIVNVQGDEPLVPPVIIRQVADNLAACSAGMATLAVPIASSEEAFNPNAVKVVMDAQGYALYFSRATIPWERERFAQSKETIGDCFLRHIGIYAYRAGFIRRYVNWAPSQLEQIELLEQLRVLWYGEKIHVAVAKAVPAVGVDTQSDLDRVRAIMLNQ.

Belongs to the KdsB family.

The protein localises to the cytoplasm. The catalysed reaction is 3-deoxy-alpha-D-manno-oct-2-ulosonate + CTP = CMP-3-deoxy-beta-D-manno-octulosonate + diphosphate. Its pathway is nucleotide-sugar biosynthesis; CMP-3-deoxy-D-manno-octulosonate biosynthesis; CMP-3-deoxy-D-manno-octulosonate from 3-deoxy-D-manno-octulosonate and CTP: step 1/1. It participates in bacterial outer membrane biogenesis; lipopolysaccharide biosynthesis. In terms of biological role, activates KDO (a required 8-carbon sugar) for incorporation into bacterial lipopolysaccharide in Gram-negative bacteria. The chain is 3-deoxy-manno-octulosonate cytidylyltransferase from Yersinia pseudotuberculosis serotype O:1b (strain IP 31758).